Consider the following 350-residue polypeptide: tRNA uridine(34) hydroxylase (350 aa).

Positions Asp146–Leu240 constitute a Rhodanese domain. Residue Cys200 is the Cysteine persulfide intermediate of the active site.

It belongs to the TrhO family.

It catalyses the reaction uridine(34) in tRNA + AH2 + O2 = 5-hydroxyuridine(34) in tRNA + A + H2O. Catalyzes oxygen-dependent 5-hydroxyuridine (ho5U) modification at position 34 in tRNAs, the first step in 5-carboxymethoxyuridine (cmo5U) biosynthesis. May be part of an alternate pathway, which is able to bypass cmo5U biogenesis in a subset of tRNAs under aerobic conditions. The protein is tRNA uridine(34) hydroxylase of Escherichia coli O127:H6 (strain E2348/69 / EPEC).